Reading from the N-terminus, the 624-residue chain is Chaperone protein HtpG (624 aa).

Residues 1-336 (MKGQETRGFQ…SNDLPLNVSR (336 aa)) are a; substrate-binding. A b region spans residues 337–552 (EILQDSTVTR…ADEMSTQMAK (216 aa)). Positions 553–624 (LFAAAGQSVP…IRRMNQLLVS (72 aa)) are c.

Belongs to the heat shock protein 90 family. In terms of assembly, homodimer.

The protein resides in the cytoplasm. In terms of biological role, molecular chaperone. Has ATPase activity. The protein is Chaperone protein HtpG of Salmonella paratyphi B (strain ATCC BAA-1250 / SPB7).